Here is a 296-residue protein sequence, read N- to C-terminus: Ribosomal RNA small subunit methyltransferase A (296 aa).

S-adenosyl-L-methionine contacts are provided by Asn30, Leu32, Gly57, Glu78, Asp103, and Asn128.

The protein belongs to the class I-like SAM-binding methyltransferase superfamily. rRNA adenine N(6)-methyltransferase family. RsmA subfamily.

Its subcellular location is the cytoplasm. The catalysed reaction is adenosine(1518)/adenosine(1519) in 16S rRNA + 4 S-adenosyl-L-methionine = N(6)-dimethyladenosine(1518)/N(6)-dimethyladenosine(1519) in 16S rRNA + 4 S-adenosyl-L-homocysteine + 4 H(+). Functionally, specifically dimethylates two adjacent adenosines (A1518 and A1519) in the loop of a conserved hairpin near the 3'-end of 16S rRNA in the 30S particle. May play a critical role in biogenesis of 30S subunits. This is Ribosomal RNA small subunit methyltransferase A from Staphylococcus carnosus (strain TM300).